We begin with the raw amino-acid sequence, 447 residues long: UDP-N-acetylmuramate--L-alanine ligase (447 aa).

G115–S121 lines the ATP pocket.

It belongs to the MurCDEF family.

It is found in the cytoplasm. The enzyme catalyses UDP-N-acetyl-alpha-D-muramate + L-alanine + ATP = UDP-N-acetyl-alpha-D-muramoyl-L-alanine + ADP + phosphate + H(+). The protein operates within cell wall biogenesis; peptidoglycan biosynthesis. In terms of biological role, cell wall formation. The polypeptide is UDP-N-acetylmuramate--L-alanine ligase (Streptococcus thermophilus (strain CNRZ 1066)).